The sequence spans 287 residues: Elongation factor Ts (287 aa).

The interval 80–83 (TDFL) is involved in Mg(2+) ion dislocation from EF-Tu.

It belongs to the EF-Ts family.

It is found in the cytoplasm. Its function is as follows. Associates with the EF-Tu.GDP complex and induces the exchange of GDP to GTP. It remains bound to the aminoacyl-tRNA.EF-Tu.GTP complex up to the GTP hydrolysis stage on the ribosome. The chain is Elongation factor Ts from Pseudomonas savastanoi pv. phaseolicola (strain 1448A / Race 6) (Pseudomonas syringae pv. phaseolicola (strain 1448A / Race 6)).